A 498-amino-acid chain; its full sequence is ATP synthase subunit beta, chloroplastic (498 aa).

172–179 (GGAGVGKT) is a binding site for ATP.

The protein belongs to the ATPase alpha/beta chains family. F-type ATPases have 2 components, CF(1) - the catalytic core - and CF(0) - the membrane proton channel. CF(1) has five subunits: alpha(3), beta(3), gamma(1), delta(1), epsilon(1). CF(0) has four main subunits: a(1), b(1), b'(1) and c(9-12).

The protein localises to the plastid. It is found in the chloroplast thylakoid membrane. It catalyses the reaction ATP + H2O + 4 H(+)(in) = ADP + phosphate + 5 H(+)(out). Produces ATP from ADP in the presence of a proton gradient across the membrane. The catalytic sites are hosted primarily by the beta subunits. This is ATP synthase subunit beta, chloroplastic from Nandina domestica (Heavenly bamboo).